The chain runs to 226 residues: MTCCEGWTSCNGFSLLILILLGVVINCIPLGISLVEADSTSQNPISCYEWWFPGIIGAGLMAIPATTMSLAARKRACCNNKTGMFLSSLFSVITVVGAVYCMLVSLQALLEGPLICNTQANSTVTCEFSLKNLSKFDPESFNLLWFFNGTCVSPTDFKNPTINNMVSNWKIPNSNSEEDRHRIFHFSVFMSLLLVGILELLFGLSQILIGFLGCLCGVSQRRSQIV.

Topologically, residues 1–14 are lumenal; it reads MTCCEGWTSCNGFS. A helical membrane pass occupies residues 15 to 35; sequence LLILILLGVVINCIPLGISLV. The Cytoplasmic segment spans residues 36–49; sequence EADSTSQNPISCYE. A helical membrane pass occupies residues 50 to 70; sequence WWFPGIIGAGLMAIPATTMSL. Residues 71–83 are Lumenal-facing; that stretch reads AARKRACCNNKTG. The helical transmembrane segment at 84-104 threads the bilayer; the sequence is MFLSSLFSVITVVGAVYCMLV. The Cytoplasmic portion of the chain corresponds to 105–191; it reads SLQALLEGPL…RIFHFSVFMS (87 aa). Residues 192-212 form a helical membrane-spanning segment; it reads LLLVGILELLFGLSQILIGFL. Over 213-226 the chain is Lumenal; sequence GCLCGVSQRRSQIV.

The protein belongs to the L6 tetraspanin family. Glycosylated at Asn-132, Asn-148 and Asn-163 in presence of ceramide which inverts the orientation of TM4SF20 in membranes exposing these residues to the endoplasmic reticulum lumen. In terms of processing, cleaved by signal peptidase at Ser-14 but the peptide does not act as a signal peptide. Cleavage is inhibited by ceramide which inverts the orientation of TM4SF20 in membranes exposing the N-terminus to the cytosol and not to the endoplasmic reticulum lumen.

Its subcellular location is the membrane. It localises to the endoplasmic reticulum membrane. Polytopic transmembrane protein. Inhibits regulated intramembrane proteolysis (RIP) of CREB3L1, inhibiting its activation and the induction of collagen synthesis. In response to ceramide, which alters TM4SF20 membrane topology, stimulates RIP activation of CREB3L1. Ceramide reverses the direction through which transmembrane helices are translocated into the endoplasmic reticulum membrane during translation of TM4SF20, this mechanism is called 'regulated alternative translocation' (RAT) and regulates the function of the transmembrane protein. The polypeptide is Transmembrane 4 L6 family member 20 (Tm4sf20) (Mus musculus (Mouse)).